Here is a 121-residue protein sequence, read N- to C-terminus: Large ribosomal subunit protein bL12 (121 aa).

This sequence belongs to the bacterial ribosomal protein bL12 family. In terms of assembly, homodimer. Part of the ribosomal stalk of the 50S ribosomal subunit. Forms a multimeric L10(L12)X complex, where L10 forms an elongated spine to which 2 to 4 L12 dimers bind in a sequential fashion. Binds GTP-bound translation factors.

Forms part of the ribosomal stalk which helps the ribosome interact with GTP-bound translation factors. Is thus essential for accurate translation. The polypeptide is Large ribosomal subunit protein bL12 (Streptococcus agalactiae serotype Ia (strain ATCC 27591 / A909 / CDC SS700)).